Here is a 142-residue protein sequence, read N- to C-terminus: Large ribosomal subunit protein uL13 (142 aa).

Belongs to the universal ribosomal protein uL13 family. Part of the 50S ribosomal subunit.

This protein is one of the early assembly proteins of the 50S ribosomal subunit, although it is not seen to bind rRNA by itself. It is important during the early stages of 50S assembly. The sequence is that of Large ribosomal subunit protein uL13 from Marinomonas sp. (strain MWYL1).